The following is a 484-amino-acid chain: Cysteine desulfurase, mitochondrial (484 aa).

Positions 29–42 (LATSASTSSSTTTS) are enriched in low complexity. Residues 29 to 69 (LATSASTSSSTTTSNAETGELHVSTPLDSPSVHPPDGSSIS) are disordered. Pyridoxal 5'-phosphate-binding positions include 153–154 (AT), asparagine 233, glutamine 261, and 281–283 (SSH). Lysine 284 carries the N6-(pyridoxal phosphate)lysine modification. Residue threonine 321 coordinates pyridoxal 5'-phosphate. Catalysis depends on cysteine 408, which acts as the Cysteine persulfide intermediate. Residue cysteine 408 participates in [2Fe-2S] cluster binding.

It belongs to the class-V pyridoxal-phosphate-dependent aminotransferase family. NifS/IscS subfamily. The cofactor is pyridoxal 5'-phosphate.

The protein localises to the mitochondrion. The catalysed reaction is (sulfur carrier)-H + L-cysteine = (sulfur carrier)-SH + L-alanine. Catalyzes the removal of elemental sulfur from cysteine to produce alanine. It supplies the inorganic sulfur for iron-sulfur (Fe-S) clusters. Plays a role in both tRNA-processing and mitochondrial metabolism. Involved in the 2-thio-modification of both 5-carboxymethylaminomethyl-2-thiouridine in mitochondrial tRNAs and 5-methoxycarbonylmethyl-2-thiouridine (mcm5s2U) in cytoplasmic tRNAs. This chain is Cysteine desulfurase, mitochondrial, found in Candida maltosa (Yeast).